A 458-amino-acid polypeptide reads, in one-letter code: Zinc finger protein 239 (458 aa).

Lysine 108 is covalently cross-linked (Glycyl lysine isopeptide (Lys-Gly) (interchain with G-Cter in SUMO2)). Phosphoserine is present on serine 191. 9 C2H2-type zinc fingers span residues 207-229 (YECSQCGKNFSQSSELLLHQRDH), 235-257 (YKCEQCGKGFTRSSSLLIHQAVH), 263-285 (YKCDKCGKGFTRSSSLLIHHAVH), 291-313 (YKCDKCGKGFSQSSKLHIHQRVH), 319-341 (YECEECGMSFSQRSNLHIHQRVH), 347-369 (YKCGECGKGFSQSSNLHIHRCIH), 375-397 (YQCYECGKGFSQSSDLRIHLRVH), 403-425 (YHCGKCGKGFSQSSKLLIHQRVH), and 431-453 (YECSKCGKGFSQSSNLHIHQRVH).

It belongs to the krueppel C2H2-type zinc-finger protein family.

It localises to the nucleus. Its function is as follows. May be involved in transcriptional regulation. In Homo sapiens (Human), this protein is Zinc finger protein 239 (ZNF239).